The sequence spans 141 residues: Large ribosomal subunit protein uL11 (141 aa).

This sequence belongs to the universal ribosomal protein uL11 family. As to quaternary structure, part of the ribosomal stalk of the 50S ribosomal subunit. Interacts with L10 and the large rRNA to form the base of the stalk. L10 forms an elongated spine to which L12 dimers bind in a sequential fashion forming a multimeric L10(L12)X complex. One or more lysine residues are methylated.

In terms of biological role, forms part of the ribosomal stalk which helps the ribosome interact with GTP-bound translation factors. The protein is Large ribosomal subunit protein uL11 of Prochlorococcus marinus (strain NATL1A).